The chain runs to 113 residues: MAAVLEENGCSRQSSPGAGDSDAEAGDTARHKLESLLNRNMRIEMTDGRSLIGCFLCTDRDCNVILGSAQEFLRPSDSFPVREPRVLGLAMVPGHHIVSIQVELESVTSPQYI.

Residues 1–29 (MAAVLEENGCSRQSSPGAGDSDAEAGDTA) form a disordered region. Residues 28 to 106 (TARHKLESLL…IVSIQVELES (79 aa)) enclose the Sm domain.

This sequence belongs to the snRNP Sm proteins family. Component of the N-terminal acetyltransferase C (NatC) complex.

The protein resides in the cytoplasm. The protein localises to the nucleus. Functionally, auxillary component of the N-terminal acetyltransferase C (NatC) complex which catalyzes acetylation of N-terminal methionine residues. N-terminal acetylation protects proteins from ubiquitination and degradation by the N-end rule pathway. The chain is N-alpha-acetyltransferase 38, NatC auxiliary subunit (naa38) from Xenopus tropicalis (Western clawed frog).